An 802-amino-acid polypeptide reads, in one-letter code: Chromosome alignment-maintaining phosphoprotein 1 (802 aa).

The residue at position 1 (Met-1) is an N-acetylmethionine. The span at 88-105 shows a compositional bias: basic and acidic residues; sequence SDKWSEQPKEQPSKDTES. The interval 88–475 is disordered; sequence SDKWSEQPKE…PDLWKSSFIM (388 aa). Ser-108 bears the Phosphoserine mark. Residues 135 to 148 show a composition bias toward polar residues; sequence QKTSPSLCPESQAS. Positions 185–203 are enriched in basic and acidic residues; that stretch reads ERVDPPCELPELEKPERGP. A phosphoserine mark is found at Ser-204, Ser-207, Ser-234, Ser-237, Ser-243, Ser-252, Ser-254, Ser-265, Ser-272, Ser-276, Ser-298, Ser-309, Ser-334, Ser-345, and Ser-365. Positions 261–479 are mediates interaction with MAD2L2; that stretch reads ARTASPEPRK…KSSFIMESQK (219 aa). Over residues 332–351 the composition is skewed to pro residues; the sequence is PMSPGPWKPIPSVSPGPWKP. Positions 354 to 368 are enriched in low complexity; that stretch reads SMSTASWKSSVSSGS. Positions 369–378 are enriched in polar residues; the sequence is WKTPPTSPES. A Phosphothreonine modification is found at Thr-371. A phosphoserine mark is found at Ser-375, Ser-394, Ser-405, Ser-416, Ser-421, Ser-425, Ser-432, Ser-434, and Ser-441. Residues 440–580 are mediates localization to the spindle and the kinetochore and is required for the attachment of spindle microtubules to the kinetochore; the sequence is VSPDQRKTSP…EIQLEAVDNA (141 aa). Residue Thr-447 is modified to Phosphothreonine. 3 positions are modified to phosphoserine: Ser-448, Ser-451, and Ser-461. Position 479 is an N6-acetyllysine; alternate (Lys-479). Lys-479 is covalently cross-linked (Glycyl lysine isopeptide (Lys-Gly) (interchain with G-Cter in SUMO2); alternate). Phosphoserine is present on residues Ser-497, Ser-502, and Ser-532. Lys-555 is covalently cross-linked (Glycyl lysine isopeptide (Lys-Gly) (interchain with G-Cter in SUMO2)). The mediates localization to the chromosome and the spindle and negatively regulates chromosome alignment stretch occupies residues 581-802; sequence KCDSLAQEGL…LESPLEEQQI (222 aa). Thr-593 bears the Phosphothreonine mark. Residue Lys-596 forms a Glycyl lysine isopeptide (Lys-Gly) (interchain with G-Cter in SUMO2) linkage. Phosphoserine occurs at positions 603, 605, 617, 622, 641, 642, and 643. Positions 603 to 625 are disordered; it reads SPSSKKLKKDSQENSDAELSSSE. A Glycyl lysine isopeptide (Lys-Gly) (interchain with G-Cter in SUMO2) cross-link involves residue Lys-660. At Ser-665 the chain carries Phosphoserine. Residue Lys-679 forms a Glycyl lysine isopeptide (Lys-Gly) (interchain with G-Cter in SUMO2) linkage. Ser-726 carries the phosphoserine modification. A C2H2-type zinc finger spans residues 728 to 750; it reads YKCTICGKAFLLESLLKNHVAAH.

Interacts with MAD2L2. Interacts with POGZ, CBX1, CBX3 and CBX5. Post-translationally, phosphorylated by CDK1. Mitotic phosphorylation is required for the attachment of spindle microtubules to the kinetochore.

It is found in the nucleus. Its subcellular location is the chromosome. The protein localises to the centromere. The protein resides in the kinetochore. It localises to the cytoplasm. It is found in the cytoskeleton. Its subcellular location is the spindle. In terms of biological role, required for proper alignment of chromosomes at metaphase and their accurate segregation during mitosis. Involved in the maintenance of spindle microtubules attachment to the kinetochore during sister chromatid biorientation. May recruit CENPE and CENPF to the kinetochore. The sequence is that of Chromosome alignment-maintaining phosphoprotein 1 (Champ1) from Mus musculus (Mouse).